The sequence spans 217 residues: 3,4-dihydroxy-2-butanone 4-phosphate synthase (217 aa).

D-ribulose 5-phosphate-binding positions include 37-38 (RE), D42, 150-154 (RGGHT), and E174. Mg(2+) is bound at residue E38. H153 provides a ligand contact to Mg(2+).

This sequence belongs to the DHBP synthase family. As to quaternary structure, homodimer. Mg(2+) serves as cofactor. It depends on Mn(2+) as a cofactor.

The catalysed reaction is D-ribulose 5-phosphate = (2S)-2-hydroxy-3-oxobutyl phosphate + formate + H(+). Its pathway is cofactor biosynthesis; riboflavin biosynthesis; 2-hydroxy-3-oxobutyl phosphate from D-ribulose 5-phosphate: step 1/1. In terms of biological role, catalyzes the conversion of D-ribulose 5-phosphate to formate and 3,4-dihydroxy-2-butanone 4-phosphate. This is 3,4-dihydroxy-2-butanone 4-phosphate synthase from Pectobacterium atrosepticum (strain SCRI 1043 / ATCC BAA-672) (Erwinia carotovora subsp. atroseptica).